The following is a 124-amino-acid chain: UPF0482 protein YpsIP31758_1865 (124 aa).

Residues 1–32 form the signal peptide; sequence MMKINNLPRLIRTFLPATLLMLPLVWQTPALA. Residues 47–68 are disordered; sequence GGNNDPMSKEQARQSQQQWDET.

This sequence belongs to the UPF0482 family.

In Yersinia pseudotuberculosis serotype O:1b (strain IP 31758), this protein is UPF0482 protein YpsIP31758_1865.